Reading from the N-terminus, the 404-residue chain is LL-diaminopimelate aminotransferase (404 aa).

2 residues coordinate substrate: Y15 and G42. Pyridoxal 5'-phosphate-binding positions include Y72, 108–109 (AK), Y132, N188, Y219, and 247–249 (SFS). Substrate is bound by residues K109, Y132, and N188. Residue K250 is modified to N6-(pyridoxal phosphate)lysine. The pyridoxal 5'-phosphate site is built by R258 and N288. N288 and R384 together coordinate substrate.

It belongs to the class-I pyridoxal-phosphate-dependent aminotransferase family. LL-diaminopimelate aminotransferase subfamily. In terms of assembly, homodimer. Requires pyridoxal 5'-phosphate as cofactor.

The catalysed reaction is (2S,6S)-2,6-diaminopimelate + 2-oxoglutarate = (S)-2,3,4,5-tetrahydrodipicolinate + L-glutamate + H2O + H(+). Its pathway is amino-acid biosynthesis; L-lysine biosynthesis via DAP pathway; LL-2,6-diaminopimelate from (S)-tetrahydrodipicolinate (aminotransferase route): step 1/1. Functionally, involved in the synthesis of meso-diaminopimelate (m-DAP or DL-DAP), required for both lysine and peptidoglycan biosynthesis. Catalyzes the direct conversion of tetrahydrodipicolinate to LL-diaminopimelate. The sequence is that of LL-diaminopimelate aminotransferase from Lachnoclostridium phytofermentans (strain ATCC 700394 / DSM 18823 / ISDg) (Clostridium phytofermentans).